A 502-amino-acid polypeptide reads, in one-letter code: Solute carrier family 2, facilitated glucose transporter member 5 (502 aa).

Residue methionine 1 is modified to N-acetylmethionine. Over 1–17 (MEKEDQEKTGKLTLVLA) the chain is Cytoplasmic. The helical transmembrane segment at 18 to 38 (LATFLAAFGSSFQYGYNVAAV) threads the bilayer. Tyrosine 31 is a binding site for D-fructose. Topologically, residues 39 to 67 (NSPSEFMQQFYNDTYYDRNKENIESFTLT) are extracellular. Asparagine 50 is a glycosylation site (N-linked (GlcNAc...) asparagine). Residues 68 to 90 (LLWSLTVSMFPFGGFIGSLMVGF) form a helical membrane-spanning segment. Residues 91 to 97 (LVNNLGR) are Cytoplasmic-facing. The helical transmembrane segment at 98–118 (KGALLFNNIFSILPAILMGCS) threads the bilayer. Topologically, residues 119–125 (KIAKSFE) are extracellular. Residues 126–148 (IIIASRLLVGICAGISSNVVPMY) form a helical membrane-spanning segment. Residues 149–160 (LGELAPKNLRGA) are Cytoplasmic-facing. A helical membrane pass occupies residues 161-181 (LGVVPQLFITVGILVAQLFGL). Glutamine 166 is a binding site for D-fructose. At 182 to 191 (RSVLASEEGW) the chain is on the extracellular side. Residues 192-212 (PILLGLTGVPAGLQLLLLPFF) traverse the membrane as a helical segment. At 213 to 276 (PESPRYLLIQ…LFRMQSLRWQ (64 aa)) the chain is on the cytoplasmic side. The chain crosses the membrane as a helical span at residues 277–297 (LISTIVLMAGQQLSGVNAIYY). Residues glutamine 287 and 295 to 297 (IYY) contribute to the D-fructose site. At 298–312 (YADQIYLSAGVKSND) the chain is on the extracellular side. The helical transmembrane segment at 313 to 333 (VQYVTAGTGAVNVFMTMVTVF) threads the bilayer. Residues 334-341 (VVELWGRR) lie on the Cytoplasmic side of the membrane. Residues 342 to 362 (NLLLIGFSTCLTACIVLTVAL) form a helical membrane-spanning segment. Topologically, residues 363-370 (ALQNTISW) are extracellular. Residues 371–393 (MPYVSIVCVIVYVIGHAVGPSPI) traverse the membrane as a helical segment. Histidine 386 is a D-fructose binding site. Topologically, residues 394–411 (PALFITEIFLQSSRPSAY) are cytoplasmic. A helical membrane pass occupies residues 412–432 (MIGGSVHWLSNFIVGLIFPFI). 418–419 (HW) is a binding site for D-fructose. The Extracellular portion of the chain corresponds to 433 to 438 (QVGLGP). Residues 439 to 459 (YSFIIFAIICLLTTIYIFMVV) traverse the membrane as a helical segment. Residues 460 to 502 (PETKGRTFVEINQIFAKKNKVSDVYPEKEEKELNDLPPATREQ) are Cytoplasmic-facing.

Belongs to the major facilitator superfamily. Sugar transporter (TC 2.A.1.1) family. Glucose transporter subfamily. Detected in jejunum. Detected in kidney, skeletal muscle, brain and adipose tissue (at protein level). Detected in small intestine and in kidney, and at much lower levels in brain. Detected in enterocytes in duodenum, jejunum, and ileum.

Its subcellular location is the apical cell membrane. It is found in the cell membrane. It localises to the sarcolemma. The catalysed reaction is D-fructose(out) = D-fructose(in). Fructose uptake is inhibited by mercury ions. Fructose uptake is only slightly inhibited by cytochalasin B. In terms of biological role, functions as a fructose transporter that has only low activity with other monosaccharides. Can mediate the uptake of deoxyglucose, but with low efficiency. Essential for fructose uptake in the small intestine. Plays a role in the regulation of salt uptake and blood pressure in response to dietary fructose. Required for the development of high blood pressure in response to high dietary fructose intake. This Rattus norvegicus (Rat) protein is Solute carrier family 2, facilitated glucose transporter member 5.